The chain runs to 743 residues: MSFSNKEQGKQQPALLPSAKAIDALVRAEHRDPFAILGPHGDGAGGQFIRAFLPGALSVQVLDRDQQQVLGSLQAGEVPGLFVGHFPEARPYLLRIQWAGGEQVSEDPYSFGPLLGEMDLYLFAEGNHRDLSSCLGAQLTTVDGIDGVRFAVWAPNARRVSVVGDFNIWDGRRHPMRLRHPSGVWELFIPRLQAGEAYKYEILGPQGILPLKADPMALATQLPPDTASRVAPPLTIDWQDQEWMLARGERQRVDAPLSIYELHAGSWQCEVDDLGEVARQYSWAELAERLIPYVKDLGFTHIELMPIMEHPFGGSWGYQPLSQFAPSARYGSPQDFAAFIDACHQAGIGVILDWVPAHFPTDTHGLAQFDGTALYEYGNPLEGFHQDWDTLIYNLGRTEVHGFMLASALHWLKHFHVDGLRVDAVASMLYRDYSRKAGEWVPNRHGGRENLEAIDFLRHLNDVVALEAPGALVIAEESTAWPGVSQRTDQGGLGFAYKWNMGWMHDSLHYIQQDPVYRAHHHNELSFGLVYAWSERFILPISHDEVVHGKHSLIDKMPGDRWQKFANLRAYLSFMWAHPGKKLLFMGCEFGQWREWNHDQQLDWYLLQYPEHRGVQQLVGDLNRLYRQYPPLHDQDDVPQGFQWLIGDDAINSVYAWLRWSKSGEPLLVVANFTPVPRQGYRVGVPVAGRWSELLNSDSQLYAGSNYGNGGEAFSEEQSSHGQALSLVLNLPPLAVLILRPDS.

Residue aspartate 423 is the Nucleophile of the active site. Glutamate 476 serves as the catalytic Proton donor.

Belongs to the glycosyl hydrolase 13 family. GlgB subfamily. In terms of assembly, monomer.

It catalyses the reaction Transfers a segment of a (1-&gt;4)-alpha-D-glucan chain to a primary hydroxy group in a similar glucan chain.. Its pathway is glycan biosynthesis; glycogen biosynthesis. In terms of biological role, catalyzes the formation of the alpha-1,6-glucosidic linkages in glycogen by scission of a 1,4-alpha-linked oligosaccharide from growing alpha-1,4-glucan chains and the subsequent attachment of the oligosaccharide to the alpha-1,6 position. This Pseudomonas fluorescens (strain ATCC BAA-477 / NRRL B-23932 / Pf-5) protein is 1,4-alpha-glucan branching enzyme GlgB.